A 324-amino-acid polypeptide reads, in one-letter code: Meiotic recombination protein DLH1 (324 aa).

112-119 lines the ATP pocket; sequence GEFRCGKT. Arg214 is a binding site for dsDNA. 5 residues coordinate ssDNA: Arg214, Tyr217, Arg220, Arg226, and Arg296. Arg220 and Arg226 together coordinate dsDNA.

It belongs to the RecA family. DMC1 subfamily. In terms of assembly, double stacked ring-shaped homooctamer.

The protein resides in the nucleus. Required for meiotic recombination, synaptonemal complex formation and cell cycle progression. The sequence is that of Meiotic recombination protein DLH1 (DLH1) from Candida albicans (Yeast).